The chain runs to 200 residues: Large ribosomal subunit protein uL4 (200 aa).

The segment at 43 to 72 is disordered; the sequence is RAQKTRAEVSGSGKKPWRQKGTGRARSGDI.

This sequence belongs to the universal ribosomal protein uL4 family. As to quaternary structure, part of the 50S ribosomal subunit.

One of the primary rRNA binding proteins, this protein initially binds near the 5'-end of the 23S rRNA. It is important during the early stages of 50S assembly. It makes multiple contacts with different domains of the 23S rRNA in the assembled 50S subunit and ribosome. Functionally, forms part of the polypeptide exit tunnel. The protein is Large ribosomal subunit protein uL4 of Haemophilus ducreyi (strain 35000HP / ATCC 700724).